A 364-amino-acid polypeptide reads, in one-letter code: Aminomethyltransferase (364 aa).

This sequence belongs to the GcvT family. In terms of assembly, the glycine cleavage system is composed of four proteins: P, T, L and H.

It catalyses the reaction N(6)-[(R)-S(8)-aminomethyldihydrolipoyl]-L-lysyl-[protein] + (6S)-5,6,7,8-tetrahydrofolate = N(6)-[(R)-dihydrolipoyl]-L-lysyl-[protein] + (6R)-5,10-methylene-5,6,7,8-tetrahydrofolate + NH4(+). The glycine cleavage system catalyzes the degradation of glycine. This chain is Aminomethyltransferase, found in Salmonella arizonae (strain ATCC BAA-731 / CDC346-86 / RSK2980).